The chain runs to 1249 residues: Apoptotic protease-activating factor 1 (1249 aa).

The CARD domain occupies methionine 1–glycine 90. Positions asparagine 106–leucine 415 constitute an NB-ARC domain. Residues glycine 154 to serine 161 and arginine 265 each bind ATP. A WD 1-1 repeat occupies proline 613 to aspartate 652. One copy of the WD 1-2 repeat lies at alanine 655–threonine 694. The stretch at glutamate 697–threonine 738 is one WD 1-3 repeat. Residues glycine 741 to serine 780 form a WD 1-4 repeat. A WD 1-5 repeat occupies aspartate 796–threonine 837. Residues glycine 838–aspartate 877 form a WD 1-6 repeat. One copy of the WD 1-7 repeat lies at glycine 880–glutamate 910. The interpropeller linker stretch occupies residues glutamate 910–valine 921. A WD 2-1 repeat occupies leucine 922 to tyrosine 958. The stretch at leucine 959–serine 998 is one WD 2-2 repeat. A WD 2-3 repeat occupies glycine 1001 to leucine 1040. Residues alanine 1042–aspartate 1080 form a WD 2-4 repeat. One copy of the WD 2-5 repeat lies at cysteine 1083–glutamate 1122. The stretch at glycine 1125–leucine 1164 is one WD 2-6 repeat. Residues threonine 1176–threonine 1213 form a WD 2-7 repeat. One copy of the WD 2-8 repeat lies at phenylalanine 1214–glutamate 1249.

Monomer. Oligomerizes to a heptameric ring, known as the apoptosome, upon binding of cytochrome c and dATP. Oligomeric Apaf-1 and pro-caspase-9 bind to each other via their respective NH2-terminal CARD domains. Interacts with UACA. Interacts with APIP. Interacts (via CARD and NACHT domains) with NAIP/BIRC1 (via NACHT domain). Interacts with CIAO2A.

It localises to the cytoplasm. In terms of biological role, regulates programmed cell death; necessary for normal brain development. Participates with pro-caspase-9 (Apaf-3) in the cytochrome c-dependent activation of caspase-3, leading to apoptosis. This activation requires ATP. This Rattus norvegicus (Rat) protein is Apoptotic protease-activating factor 1 (Apaf1).